Reading from the N-terminus, the 467-residue chain is tRNA-2-methylthio-N(6)-dimethylallyladenosine synthase (467 aa).

The MTTase N-terminal domain occupies K15 to N135. [4Fe-4S] cluster is bound by residues C24, C60, C98, C177, C181, and C184. Residues L163–A395 enclose the Radical SAM core domain. Residues A398–E461 form the TRAM domain.

This sequence belongs to the methylthiotransferase family. MiaB subfamily. As to quaternary structure, monomer. The cofactor is [4Fe-4S] cluster.

The protein resides in the cytoplasm. It carries out the reaction N(6)-dimethylallyladenosine(37) in tRNA + (sulfur carrier)-SH + AH2 + 2 S-adenosyl-L-methionine = 2-methylsulfanyl-N(6)-dimethylallyladenosine(37) in tRNA + (sulfur carrier)-H + 5'-deoxyadenosine + L-methionine + A + S-adenosyl-L-homocysteine + 2 H(+). In terms of biological role, catalyzes the methylthiolation of N6-(dimethylallyl)adenosine (i(6)A), leading to the formation of 2-methylthio-N6-(dimethylallyl)adenosine (ms(2)i(6)A) at position 37 in tRNAs that read codons beginning with uridine. This chain is tRNA-2-methylthio-N(6)-dimethylallyladenosine synthase, found in Parvibaculum lavamentivorans (strain DS-1 / DSM 13023 / NCIMB 13966).